The primary structure comprises 257 residues: Small ribosomal subunit protein uS2 (257 aa).

This sequence belongs to the universal ribosomal protein uS2 family.

The polypeptide is Small ribosomal subunit protein uS2 (Ruegeria pomeroyi (strain ATCC 700808 / DSM 15171 / DSS-3) (Silicibacter pomeroyi)).